A 490-amino-acid chain; its full sequence is GTPase Der (490 aa).

2 consecutive EngA-type G domains span residues 3–166 (PVVA…MEDL) and 203–376 (IKLA…DSST). GTP contacts are provided by residues 9-16 (GRPNVGKS), 56-60 (DTGGI), 118-121 (NKTD), 209-216 (GRPNVGKS), 256-260 (DTAGV), and 321-324 (NKWD). One can recognise a KH-like domain in the interval 377–461 (RRVGTSMLTR…PIRIQFKEGE (85 aa)).

It belongs to the TRAFAC class TrmE-Era-EngA-EngB-Septin-like GTPase superfamily. EngA (Der) GTPase family. Associates with the 50S ribosomal subunit.

In terms of biological role, GTPase that plays an essential role in the late steps of ribosome biogenesis. This Escherichia coli O7:K1 (strain IAI39 / ExPEC) protein is GTPase Der.